The primary structure comprises 96 residues: Transcription and mRNA export factor SUS1 (96 aa).

Lysine 68 participates in a covalent cross-link: Glycyl lysine isopeptide (Lys-Gly) (interchain with G-Cter in ubiquitin).

This sequence belongs to the ENY2 family. Component of the nuclear pore complex (NPC)-associated TREX-2 complex (transcription and export complex 2), composed of at least SUS1, SAC3, THP1, SEM1, and CDC31. TREX-2 contains 2 SUS1 chains. The TREX-2 complex interacts with the nucleoporin NUP1. Component of the 1.8 MDa SAGA transcription coactivator-HAT complex. SAGA is built of 5 distinct domains with specialized functions. Within the SAGA complex, SUS1, SGF11, SGF73 and UBP8 form an additional subcomplex of SAGA called the DUB module (deubiquitination module). Interacts directly with THP1, SAC3, SGF11, and with the RNA polymerase II.

It is found in the nucleus. Its subcellular location is the nucleoplasm. It localises to the cytoplasm. The protein resides in the P-body. Involved in mRNA export coupled transcription activation by association with both the TREX-2 and the SAGA complexes. At the promoters, SAGA is required for recruitment of the basal transcription machinery. It influences RNA polymerase II transcriptional activity through different activities such as TBP interaction and promoter selectivity, interaction with transcription activators, and chromatin modification through histone acetylation and deubiquitination. Within the SAGA complex, participates in a subcomplex required for deubiquitination of H2B and for the maintenance of steady-state H3 methylation levels. The TREX-2 complex functions in docking export-competent ribonucleoprotein particles (mRNPs) to the nuclear entrance of the nuclear pore complex (nuclear basket). TREX-2 participates in mRNA export and accurate chromatin positioning in the nucleus by tethering genes to the nuclear periphery. May also be involved in cytoplasmic mRNA decay by interaction with components of P-bodies. In Saccharomyces cerevisiae (strain RM11-1a) (Baker's yeast), this protein is Transcription and mRNA export factor SUS1.